The chain runs to 56 residues: Small ribosomal subunit protein uS14 (56 aa).

Ser-9 is subject to Phosphoserine. Omega-N-methylarginine is present on Arg-12. Zn(2+) contacts are provided by Cys-21, Cys-24, Cys-39, and Cys-42. At Lys-48 the chain carries N6-acetyllysine.

The protein belongs to the universal ribosomal protein uS14 family. As to quaternary structure, component of the 40S small ribosomal subunit. Zn(2+) serves as cofactor.

Its subcellular location is the cytoplasm. The protein resides in the cytosol. It is found in the rough endoplasmic reticulum. Component of the small ribosomal subunit. The ribosome is a large ribonucleoprotein complex responsible for the synthesis of proteins in the cell. The polypeptide is Small ribosomal subunit protein uS14 (RPS29) (Sus scrofa (Pig)).